Consider the following 78-residue polypeptide: DNA-directed RNA polymerase subunit omega (78 aa).

It belongs to the RNA polymerase subunit omega family. As to quaternary structure, in cyanobacteria the RNAP catalytic core is composed of 2 alpha, 1 beta, 1 beta', 1 gamma and 1 omega subunit. When a sigma factor is associated with the core the holoenzyme is formed, which can initiate transcription.

The enzyme catalyses RNA(n) + a ribonucleoside 5'-triphosphate = RNA(n+1) + diphosphate. In terms of biological role, promotes RNA polymerase assembly. Latches the N- and C-terminal regions of the beta' subunit thereby facilitating its interaction with the beta and alpha subunits. In Prochlorococcus marinus subsp. pastoris (strain CCMP1986 / NIES-2087 / MED4), this protein is DNA-directed RNA polymerase subunit omega.